We begin with the raw amino-acid sequence, 436 residues long: Methylenetetrahydrofolate--tRNA-(uracil-5-)-methyltransferase TrmFO (436 aa).

Position 8 to 13 (8 to 13 (GAGLAG)) interacts with FAD.

The protein belongs to the MnmG family. TrmFO subfamily. Requires FAD as cofactor.

The protein localises to the cytoplasm. It carries out the reaction uridine(54) in tRNA + (6R)-5,10-methylene-5,6,7,8-tetrahydrofolate + NADH + H(+) = 5-methyluridine(54) in tRNA + (6S)-5,6,7,8-tetrahydrofolate + NAD(+). It catalyses the reaction uridine(54) in tRNA + (6R)-5,10-methylene-5,6,7,8-tetrahydrofolate + NADPH + H(+) = 5-methyluridine(54) in tRNA + (6S)-5,6,7,8-tetrahydrofolate + NADP(+). Its function is as follows. Catalyzes the folate-dependent formation of 5-methyl-uridine at position 54 (M-5-U54) in all tRNAs. The chain is Methylenetetrahydrofolate--tRNA-(uracil-5-)-methyltransferase TrmFO from Persephonella marina (strain DSM 14350 / EX-H1).